The sequence spans 370 residues: Actin-related protein 2/3 complex subunit 1A (370 aa).

6 WD repeats span residues 6 to 45 (FLLEPITCHAWNRDRTQIALSPNNHEVHIYKKNGSQWTKA), 50 to 89 (EHNGHITGIDWAPKSDRIVTCGADRNAYVWSQKDGIWKPT), 140 to 179 (PIRSTVLSLDWHPNNVLLAAGSCDFKCRVFSAYIKEVDEK), 202 to 241 (GTGGWVHGVSFSASGSRLAWVSHDSTVSVADASKSVQVST), 244 to 284 (TEFL…TFVS), and 322 to 365 (LHQN…SSIQ).

This sequence belongs to the WD repeat ARPC1 family. Probable component of the Arp2/3 complex in which it may replace ARPC1B.

It localises to the cytoplasm. The protein localises to the cytoskeleton. It is found in the nucleus. Probably functions as a component of the Arp2/3 complex which is involved in regulation of actin polymerization and together with an activating nucleation-promoting factor (NPF) mediates the formation of branched actin networks. In addition to its role in the cytoplasmic cytoskeleton, the Arp2/3 complex also promotes actin polymerization in the nucleus, thereby regulating gene transcription and repair of damaged DNA. The sequence is that of Actin-related protein 2/3 complex subunit 1A (Arpc1a) from Rattus norvegicus (Rat).